Consider the following 114-residue polypeptide: Large ribosomal subunit protein uL22 (114 aa).

It belongs to the universal ribosomal protein uL22 family. Part of the 50S ribosomal subunit.

In terms of biological role, this protein binds specifically to 23S rRNA; its binding is stimulated by other ribosomal proteins, e.g. L4, L17, and L20. It is important during the early stages of 50S assembly. It makes multiple contacts with different domains of the 23S rRNA in the assembled 50S subunit and ribosome. Its function is as follows. The globular domain of the protein is located near the polypeptide exit tunnel on the outside of the subunit, while an extended beta-hairpin is found that lines the wall of the exit tunnel in the center of the 70S ribosome. The protein is Large ribosomal subunit protein uL22 of Streptococcus agalactiae serotype Ia (strain ATCC 27591 / A909 / CDC SS700).